Reading from the N-terminus, the 305-residue chain is Plant-type L-asparaginase (305 aa).

Threonine 175 functions as the Nucleophile in the catalytic mechanism. Residues 202–205 (RVGD) and 224–227 (TGLG) contribute to the substrate site.

Belongs to the Ntn-hydrolase family. In terms of assembly, heterotetramer of two alpha and two beta chains arranged as a dimer of alpha/beta heterodimers. The uncleaved protein forms homodimers. In terms of processing, autocleaved. Generates the alpha and beta subunits. The N-terminal residue of the beta subunit is thought to be responsible for the nucleophile hydrolase activity.

It carries out the reaction L-asparagine + H2O = L-aspartate + NH4(+). Its function is as follows. Catalyzes the hydrolysis of L-asparagine into L-aspartate and ammonia. Does not exhibit glutaminase activity. The polypeptide is Plant-type L-asparaginase (Pyrococcus abyssi (strain GE5 / Orsay)).